Consider the following 26-residue polypeptide: uncharacterized protein (26 aa).

The protein resides in the plastid. The protein localises to the chloroplast. This is an uncharacterized protein from Trieres chinensis (Marine centric diatom).